The chain runs to 122 residues: RING-box protein 1B (122 aa).

The segment covering Met-1–Pro-23 has biased composition (acidic residues). The interval Met-1–Gly-28 is disordered. Residues Cys-57, Cys-60, Cys-68, Cys-71, Cys-82, Cys-89, His-91, His-94, His-96, Cys-108, and Asp-111 each contribute to the Zn(2+) site. Residues Cys-57–Asn-112 form an RING-type zinc finger.

Belongs to the RING-box family. Part of a SCF complex consisting of Skpa (SKP1), Cul1, Roc1B and a F-box protein. Highly expressed in early embryos, and in pupae. Widely expressed in adult males, while it is weakly expressed in adult females.

The protein resides in the cytoplasm. The protein localises to the nucleus. It functions in the pathway protein modification; protein ubiquitination. Its function is as follows. Component of the SCF (SKP1-CUL1-F-box protein) E3 ubiquitin ligase complex, which mediates the ubiquitination and subsequent proteasomal degradation of target proteins. Through the RING-type zinc finger, seems to recruit the E2 ubiquitination enzyme to the complex and brings it into close proximity to the substrate. This is RING-box protein 1B (Roc1b) from Drosophila melanogaster (Fruit fly).